We begin with the raw amino-acid sequence, 329 residues long: Olfactory receptor 5AL1 (329 aa).

Residues 1-44 (MCALKGFLEENFYTYSVAKGNHSTVYEFILLGLTDNAELQVTLF) are Extracellular-facing. Asn21 carries N-linked (GlcNAc...) asparagine glycosylation. Residues 45 to 65 (GIFLVVYLASFMGNFGLIMLI) form a helical membrane-spanning segment. Residues 66–73 (QISPQLHT) lie on the Cytoplasmic side of the membrane. The helical transmembrane segment at 74–94 (PMYFFLSHLAFVDFSFTSSVA) threads the bilayer. Residues 95-113 (PNTLVNFLCEVKSITFYAC) lie on the Extracellular side of the membrane. An intrachain disulfide couples Cys113 to Cys205. A helical transmembrane segment spans residues 114–134 (AIQVCCFITFVVCELYLLSIM). At 135–157 (AYDRYVAICNPLLYVILIPRKLC) the chain is on the cytoplasmic side. A helical transmembrane segment spans residues 158–178 (IKLIASTYVYGFTVGLVQTVA). Residues 179–220 (TSYLSFCDSNVINHFYHDDVPLVALACSDTHVKELMLLIIAG) are Extracellular-facing. A helical transmembrane segment spans residues 221 to 241 (FNTLCSLVIVLISYGFIFFAI). Topologically, residues 242 to 253 (LRIHSAEGRQKA) are cytoplasmic. The helical transmembrane segment at 254–274 (FSTSASHLTSITIFYGTIIFM) threads the bilayer. At 275 to 287 (YPQPKSSHSLNMD) the chain is on the extracellular side. A helical transmembrane segment spans residues 288-308 (KVASVFNVVVIPTLNPLIYSL). The Cytoplasmic segment spans residues 309–329 (RNQEVKNALKRIIEKLCLAVK).

It belongs to the G-protein coupled receptor 1 family.

It localises to the cell membrane. Odorant receptor. The sequence is that of Olfactory receptor 5AL1 (OR5AL1) from Homo sapiens (Human).